The chain runs to 31 residues: Cytochrome b6-f complex subunit 6 (31 aa).

Residues 4–26 form a helical membrane-spanning segment; sequence LTSYFGFLLAASTITPALFIGLN.

It belongs to the PetL family. As to quaternary structure, the 4 large subunits of the cytochrome b6-f complex are cytochrome b6, subunit IV (17 kDa polypeptide, PetD), cytochrome f and the Rieske protein, while the 4 small subunits are PetG, PetL, PetM and PetN. The complex functions as a dimer.

It is found in the plastid. The protein resides in the chloroplast thylakoid membrane. Component of the cytochrome b6-f complex, which mediates electron transfer between photosystem II (PSII) and photosystem I (PSI), cyclic electron flow around PSI, and state transitions. PetL is important for photoautotrophic growth as well as for electron transfer efficiency and stability of the cytochrome b6-f complex. This is Cytochrome b6-f complex subunit 6 from Phalaenopsis aphrodite subsp. formosana (Moth orchid).